Here is an 899-residue protein sequence, read N- to C-terminus: Conserved oligomeric Golgi complex subunit 3 (899 aa).

It belongs to the COG3 family. Component of the conserved oligomeric Golgi complex which is composed of eight different subunits and is required for normal Golgi morphology and localization.

It localises to the golgi apparatus membrane. Functionally, involved in ER-Golgi transport. The chain is Conserved oligomeric Golgi complex subunit 3 from Aedes aegypti (Yellowfever mosquito).